We begin with the raw amino-acid sequence, 508 residues long: Photosystem II CP47 reaction center protein (508 aa).

The next 6 membrane-spanning stretches (helical) occupy residues 21-36 (SVHI…WAGS), 101-115 (IMFS…IWHW), 140-156 (GIHL…FGAF), 203-218 (IAAG…FHLS), 237-252 (VLSS…AFIV), and 457-472 (TFAL…HGAR).

The protein belongs to the PsbB/PsbC family. PsbB subfamily. PSII is composed of 1 copy each of membrane proteins PsbA, PsbB, PsbC, PsbD, PsbE, PsbF, PsbH, PsbI, PsbJ, PsbK, PsbL, PsbM, PsbT, PsbX, PsbY, PsbZ, Psb30/Ycf12, at least 3 peripheral proteins of the oxygen-evolving complex and a large number of cofactors. It forms dimeric complexes. The cofactor is Binds multiple chlorophylls. PSII binds additional chlorophylls, carotenoids and specific lipids..

Its subcellular location is the plastid. It localises to the chloroplast thylakoid membrane. Its function is as follows. One of the components of the core complex of photosystem II (PSII). It binds chlorophyll and helps catalyze the primary light-induced photochemical processes of PSII. PSII is a light-driven water:plastoquinone oxidoreductase, using light energy to abstract electrons from H(2)O, generating O(2) and a proton gradient subsequently used for ATP formation. The protein is Photosystem II CP47 reaction center protein of Pinus koraiensis (Korean pine).